The sequence spans 147 residues: Allograft inflammatory factor 1 (147 aa).

Ser2 is modified (N-acetylserine). Position 11 is an N6-acetyllysine (Lys11). Residue Ser39 is modified to Phosphoserine. Positions 45–80 constitute an EF-hand 1 domain; it reads SKLEAFKTKYMEFDLNGNGDIDIMSLKRMLEKLGVP. Residues Asp58, Asn60, Asn62, Asp64, Glu98, Thr100, and Asp105 each contribute to the Ca(2+) site. The EF-hand 2; degenerate domain maps to 81-115; the sequence is KTHLELKKLIREVSSGSEETFSYSDFLRMMLGKRS. Residues 127–147 form a disordered region; it reads KNKEHQKPTGPPAKKAISELP.

Homodimer (Potential). Monomer. Interacts with LCP1. As to expression, cardiac allograft, spleen and testis. Expressed by inflammatory cells (macrophages and neutrophils).

The protein resides in the cytoplasm. It localises to the cytoskeleton. The protein localises to the cell projection. It is found in the ruffle membrane. Its subcellular location is the phagocytic cup. Actin-binding protein that enhances membrane ruffling and RAC activation. Enhances the actin-bundling activity of LCP1. Binds calcium. Plays a role in RAC signaling and in phagocytosis. May play an role in macrophage activation and function. Promotes the proliferation of vascular smooth muscle cells and of T-lymphocytes. Enhances lymphocyte migration. Plays a role in vascular inflammation. The protein is Allograft inflammatory factor 1 (Aif1) of Rattus norvegicus (Rat).